The sequence spans 213 residues: Adenylate kinase (213 aa).

Position 10–15 (10–15) interacts with ATP; that stretch reads GAGKGT. An NMP region spans residues 30–59; sequence AVGDIFRTIIKTSTSEAELINNYVKQGALI. Residues R36, 57–59, 85–88, and Q92 contribute to the AMP site; these read ALI and GYPR. The tract at residues 123 to 161 is LID; the sequence is GRYSCKNCGKIYNVHFLQPKTDYVCDVCSSNVFDYRRDD. R124 is an ATP binding site. Residues C127 and C130 each contribute to the Zn(2+) site. 133-134 is a binding site for ATP; that stretch reads IY. C147 and C150 together coordinate Zn(2+). The AMP site is built by R158 and R169. K197 is an ATP binding site.

Belongs to the adenylate kinase family. Monomer.

It is found in the cytoplasm. It catalyses the reaction AMP + ATP = 2 ADP. The protein operates within purine metabolism; AMP biosynthesis via salvage pathway; AMP from ADP: step 1/1. Functionally, catalyzes the reversible transfer of the terminal phosphate group between ATP and AMP. Plays an important role in cellular energy homeostasis and in adenine nucleotide metabolism. This Rickettsia typhi (strain ATCC VR-144 / Wilmington) protein is Adenylate kinase.